The sequence spans 689 residues: Glycine--tRNA ligase beta subunit (689 aa).

It belongs to the class-II aminoacyl-tRNA synthetase family. In terms of assembly, tetramer of two alpha and two beta subunits.

It localises to the cytoplasm. The catalysed reaction is tRNA(Gly) + glycine + ATP = glycyl-tRNA(Gly) + AMP + diphosphate. The sequence is that of Glycine--tRNA ligase beta subunit from Sodalis glossinidius (strain morsitans).